The sequence spans 89 residues: Small ribosomal subunit protein uS15 (89 aa).

Positions 1–24 (MSLNAEQKSEIVEQFRRSPSDTGS) are disordered. Residues 7-19 (QKSEIVEQFRRSP) are compositionally biased toward basic and acidic residues.

The protein belongs to the universal ribosomal protein uS15 family. In terms of assembly, part of the 30S ribosomal subunit. Forms a bridge to the 50S subunit in the 70S ribosome, contacting the 23S rRNA.

One of the primary rRNA binding proteins, it binds directly to 16S rRNA where it helps nucleate assembly of the platform of the 30S subunit by binding and bridging several RNA helices of the 16S rRNA. Functionally, forms an intersubunit bridge (bridge B4) with the 23S rRNA of the 50S subunit in the ribosome. This chain is Small ribosomal subunit protein uS15, found in Halorhodospira halophila (strain DSM 244 / SL1) (Ectothiorhodospira halophila (strain DSM 244 / SL1)).